We begin with the raw amino-acid sequence, 1027 residues long: Fibril-forming collagen alpha chain (1027 aa).

Positions Tyr1–Val12 are nonhelical region (N-terminal). The interval Tyr1–Ala1027 is disordered. Residues Gly13–Ser1023 form a triple-helical region region. Over residues Pro17–Ser26 the composition is skewed to pro residues. 4-hydroxyproline; partial occurs at positions 21 and 24. 2 positions are modified to 4-hydroxyproline: Pro27 and Pro39. Pro53 bears the 3-hydroxyproline; partial mark. Pro54 is modified (4-hydroxyproline). The segment covering Ser63–Pro72 has biased composition (basic and acidic residues). At Pro72 the chain carries 4-hydroxyproline; partial. Over residues Gly73 to Gly91 the composition is skewed to gly residues. 4-hydroxyproline is present on residues Pro90 and Pro93. A 5-hydroxylysine mark is found at Lys96 and Lys108. Residues Lys96 and Lys108 are each glycosylated (O-linked (Gal...) hydroxylysine). 2 positions are modified to 4-hydroxyproline; partial: Pro123 and Pro128. Pro150 carries the 4-hydroxyproline modification. Pro161 is subject to 3-hydroxyproline; partial. 4-hydroxyproline is present on Pro162. Pro164 bears the 3-hydroxyproline; partial mark. 4-hydroxyproline occurs at positions 165, 174, 177, and 180. The segment covering Ile168–Ser182 has biased composition (low complexity). 5-hydroxylysine occurs at positions 183 and 192. An O-linked (Gal...) hydroxylysine glycan is attached at Lys192. 4-hydroxyproline is present on residues Pro207, Pro216, Pro219, Pro228, and Pro237. A compositionally biased stretch (low complexity) spans Glu227–Pro249. At Pro243 the chain carries 4-hydroxyproline; partial. 4-hydroxyproline occurs at positions 249 and 255. Residues Gly259–Gly268 show a composition bias toward gly residues. Residue Lys261 is modified to 5-hydroxylysine. O-linked (Gal...) hydroxylysine glycosylation occurs at Lys261. 4-hydroxyproline; partial occurs at positions 273 and 276. Residue Lys279 is modified to 5-hydroxylysine. An O-linked (Gal...) hydroxylysine glycan is attached at Lys279. 4-hydroxyproline; partial is present on residues Pro285, Pro291, and Pro303. 4-hydroxyproline occurs at positions 306, 312, 321, 327, and 339. Lys342 bears the 5-hydroxylysine mark. Pro348 carries the post-translational modification 4-hydroxyproline; partial. Position 351 is a 5-hydroxylysine; partial (Lys351). Pro366, Pro372, and Pro375 each carry 4-hydroxyproline. The span at Arg380–Gln396 shows a compositional bias: basic and acidic residues. A 4-hydroxyproline; partial modification is found at Pro381. Position 387 is a 4-hydroxyproline (Pro387). Residues Glu398–Arg420 are compositionally biased toward low complexity. The residue at position 416 (Pro416) is a 3-hydroxyproline; partial. 4-hydroxyproline is present on residues Pro417, Pro423, Pro429, and Pro432. Over residues Glu437–Glu446 the composition is skewed to basic and acidic residues. Residues Thr447 to Gln480 show a composition bias toward low complexity. A 4-hydroxyproline mark is found at Pro453, Pro465, and Pro483. Residues Pro500, Pro503, and Pro506 each carry the 4-hydroxyproline; partial modification. The span at Gly502 to Gly511 shows a compositional bias: gly residues. 4-hydroxyproline occurs at positions 513 and 525. A compositionally biased stretch (low complexity) spans Glu527 to Ala543. 4-hydroxyproline; partial occurs at positions 533 and 536. Pro540 bears the 4-hydroxyproline mark. 5-hydroxylysine is present on Lys546. Pro551 carries the post-translational modification 3-hydroxyproline; partial. Pro552 and Pro561 each carry 4-hydroxyproline. Lys567 and Lys573 each carry 5-hydroxylysine. An O-linked (Gal...) hydroxylysine glycan is attached at Lys573. Residues Ser575–Glu599 are compositionally biased toward basic and acidic residues. A 4-hydroxyproline modification is found at Pro603. Position 612 is a 5-hydroxylysine (Lys612). O-linked (Gal...) hydroxylysine glycosylation occurs at Lys612. Residue Pro621 is modified to 4-hydroxyproline; partial. 4-hydroxyproline is present on Pro627. Positions Pro635 to Gln644 are enriched in low complexity. Pro645 carries the post-translational modification 4-hydroxyproline; partial. Pro647 bears the 3-hydroxyproline; partial mark. A 4-hydroxyproline modification is found at Pro648. Lys657 carries the post-translational modification 5-hydroxylysine. The O-linked (Gal...) hydroxylysine glycan is linked to Lys657. 6 positions are modified to 4-hydroxyproline: Pro663, Pro708, Pro711, Pro714, Pro717, and Pro723. Residues Glu698–Ser710 show a composition bias toward low complexity. The span at Pro714–Ser726 shows a compositional bias: pro residues. Lys738 carries the post-translational modification 5-hydroxylysine. Lys738 carries an O-linked (Gal...) hydroxylysine glycan. 2 positions are modified to 4-hydroxyproline: Pro744 and Pro759. Over residues Gln750–Asp771 the composition is skewed to basic and acidic residues. Lys765 is subject to 5-hydroxylysine. A glycan (O-linked (Gal...) hydroxylysine) is linked at Lys765. Pro773 is modified (3-hydroxyproline; partial). Residues Pro774, Pro783, and Pro792 each carry the 4-hydroxyproline modification. Gly residues predominate over residues Gly802 to Gly814. Lys810 is modified (5-hydroxylysine). Lys810 is a glycosylation site (O-linked (Gal...) hydroxylysine). 3-hydroxyproline; partial is present on Pro815. Residues Pro816, Pro843, Pro849, Pro855, Pro861, Pro867, Pro888, Pro894, Pro903, and Pro915 each carry the 4-hydroxyproline modification. Residues Ala828–Ala848 are compositionally biased toward low complexity. Low complexity predominate over residues Gln884–Pro894. The segment covering Pro911–Lys927 has biased composition (low complexity). Residue Lys927 is modified to 5-hydroxylysine. Lys927 carries O-linked (Gal...) hydroxylysine glycosylation. The residue at position 933 (Lys933) is a 5-hydroxylysine; partial. Lys936 and Lys939 each carry 5-hydroxylysine. The O-linked (Gal...) hydroxylysine glycan is linked to Lys936. The span at Thr942–Pro962 shows a compositional bias: low complexity. Residue Pro945 is modified to 4-hydroxyproline. A 4-hydroxyproline; partial modification is found at Pro954. Residues Pro963 and Pro966 each carry the 4-hydroxyproline modification. The segment covering Gly973–Gly982 has biased composition (gly residues). Residues Pro983 to Pro1001 show a composition bias toward low complexity. 4-hydroxyproline is present on residues Pro984 and Pro990. At Pro1010 the chain carries 3-hydroxyproline; partial. Over residues Pro1010–Pro1020 the composition is skewed to pro residues. 4-hydroxyproline is present on Pro1011. Position 1013 is a 3-hydroxyproline; partial (Pro1013). Pro1014 is subject to 4-hydroxyproline. A 3-hydroxyproline; partial modification is found at Pro1016. 4-hydroxyproline is present on Pro1017. Pro1019 carries the post-translational modification 3-hydroxyproline; partial. Residue Pro1020 is modified to 4-hydroxyproline. A nonhelical region (C-terminal) region spans residues Asp1024–Ala1027.

As to quaternary structure, homotetramer.

The protein resides in the secreted. Its subcellular location is the extracellular space. It localises to the extracellular matrix. Functionally, fibril-forming collagen. The polypeptide is Fibril-forming collagen alpha chain (Riftia pachyptila (Vent tube worm)).